Consider the following 114-residue polypeptide: Transmembrane protein 14B (114 aa).

The next 4 membrane-spanning stretches (helical) occupy residues Leu-8–Val-28, Gly-34–Tyr-54, Pro-60–Met-80, and Tyr-83–Ala-103.

The protein belongs to the TMEM14 family. Interacts with IQGAP1; this interaction promotes phosphorylation and nuclear translocation of IQGAP1. Mainly expressed in the outer subventricular zone (OSVZ) of the fetal brains.

The protein resides in the membrane. Primate-specific protein involved in cortical expansion and folding in the developing neocortex. May drive neural progenitor proliferation through nuclear translocation of IQGAP1, which in turn promotes G1/S cell cycle transitions. In Homo sapiens (Human), this protein is Transmembrane protein 14B (TMEM14B).